We begin with the raw amino-acid sequence, 460 residues long: MKNYALVLAAGKGTRMKSDIPKVAFPILRKPMIEYIVENIEKSSVEEIYLVLGYKREVVEGIVKDRAKYVYQEEQLGTGHAAMMAAPVLSKLDGNTFIMPGDVPLIWYKSIDRMFAVHEDNGNDFTIVTAHYEDPEGYGRIVRNEQGVIQRIVEEKDANDFEKEIKEVNTGIYIVNNKKFFSLLKNLNNNNAKGEYYITDMVELMKKDYKIGSYMIKNNSLAMGVNDLYAISKAEKYLREYINKDHMLNGVSMINPETITIGHNVIIEPGVTINPNTTITGDTVIKAGAIVGPNTEIHNSRIDSHVVVRHSLVYDSIVREGTTVGPFAHLRDHADIGTHNRIGNFVEVKKSSTGHNTKASHLAYIGDSVVGESVNFGCGSVTVNYDGKLKHKTEIGDNVFIGCNTNLIAPIKIGDNVFIAAGSTVTKDIPDNGFAIARSRQVTKEDYSKYLISPKPKKEE.

The pyrophosphorylase stretch occupies residues 1–228 (MKNYALVLAA…NSLAMGVNDL (228 aa)). Residues 8 to 11 (LAAG), Lys22, Gln72, and 77 to 78 (GT) contribute to the UDP-N-acetyl-alpha-D-glucosamine site. Asp102 contacts Mg(2+). UDP-N-acetyl-alpha-D-glucosamine contacts are provided by Gly139, Glu154, Asn169, and Asn226. Asn226 contacts Mg(2+). The linker stretch occupies residues 229-249 (YAISKAEKYLREYINKDHMLN). The interval 250-460 (GVSMINPETI…LISPKPKKEE (211 aa)) is N-acetyltransferase. Residues Arg331 and Lys349 each coordinate UDP-N-acetyl-alpha-D-glucosamine. His361 functions as the Proton acceptor in the catalytic mechanism. Residues Tyr364 and Asn375 each coordinate UDP-N-acetyl-alpha-D-glucosamine. Acetyl-CoA-binding positions include 384-385 (NY), Ala421, and Arg438.

This sequence in the N-terminal section; belongs to the N-acetylglucosamine-1-phosphate uridyltransferase family. In the C-terminal section; belongs to the transferase hexapeptide repeat family. In terms of assembly, homotrimer. It depends on Mg(2+) as a cofactor.

It is found in the cytoplasm. It carries out the reaction alpha-D-glucosamine 1-phosphate + acetyl-CoA = N-acetyl-alpha-D-glucosamine 1-phosphate + CoA + H(+). The catalysed reaction is N-acetyl-alpha-D-glucosamine 1-phosphate + UTP + H(+) = UDP-N-acetyl-alpha-D-glucosamine + diphosphate. The protein operates within nucleotide-sugar biosynthesis; UDP-N-acetyl-alpha-D-glucosamine biosynthesis; N-acetyl-alpha-D-glucosamine 1-phosphate from alpha-D-glucosamine 6-phosphate (route II): step 2/2. Its pathway is nucleotide-sugar biosynthesis; UDP-N-acetyl-alpha-D-glucosamine biosynthesis; UDP-N-acetyl-alpha-D-glucosamine from N-acetyl-alpha-D-glucosamine 1-phosphate: step 1/1. It participates in bacterial outer membrane biogenesis; LPS lipid A biosynthesis. Catalyzes the last two sequential reactions in the de novo biosynthetic pathway for UDP-N-acetylglucosamine (UDP-GlcNAc). The C-terminal domain catalyzes the transfer of acetyl group from acetyl coenzyme A to glucosamine-1-phosphate (GlcN-1-P) to produce N-acetylglucosamine-1-phosphate (GlcNAc-1-P), which is converted into UDP-GlcNAc by the transfer of uridine 5-monophosphate (from uridine 5-triphosphate), a reaction catalyzed by the N-terminal domain. The protein is Bifunctional protein GlmU of Acholeplasma laidlawii (strain PG-8A).